Reading from the N-terminus, the 478-residue chain is Ribulose bisphosphate carboxylase large chain (478 aa).

The propeptide occupies 1 to 2; the sequence is MS. Position 3 is an N-acetylproline (proline 3). N6,N6,N6-trimethyllysine is present on lysine 14. Substrate contacts are provided by asparagine 123 and threonine 173. Catalysis depends on lysine 175, which acts as the Proton acceptor. Lysine 177 is a binding site for substrate. Mg(2+) contacts are provided by lysine 201, aspartate 203, and glutamate 204. Lysine 201 carries the post-translational modification N6-carboxylysine. Histidine 294 functions as the Proton acceptor in the catalytic mechanism. Arginine 295, histidine 327, and serine 379 together coordinate substrate.

This sequence belongs to the RuBisCO large chain family. Type I subfamily. Heterohexadecamer of 8 large chains and 8 small chains; disulfide-linked. The disulfide link is formed within the large subunit homodimers. Mg(2+) serves as cofactor. The disulfide bond which can form in the large chain dimeric partners within the hexadecamer appears to be associated with oxidative stress and protein turnover.

It localises to the plastid. It is found in the chloroplast. It carries out the reaction 2 (2R)-3-phosphoglycerate + 2 H(+) = D-ribulose 1,5-bisphosphate + CO2 + H2O. The catalysed reaction is D-ribulose 1,5-bisphosphate + O2 = 2-phosphoglycolate + (2R)-3-phosphoglycerate + 2 H(+). In terms of biological role, ruBisCO catalyzes two reactions: the carboxylation of D-ribulose 1,5-bisphosphate, the primary event in carbon dioxide fixation, as well as the oxidative fragmentation of the pentose substrate in the photorespiration process. Both reactions occur simultaneously and in competition at the same active site. The chain is Ribulose bisphosphate carboxylase large chain from Drimys granadensis.